A 469-amino-acid chain; its full sequence is ATP synthase subunit beta (469 aa).

155 to 162 contributes to the ATP binding site; the sequence is GGAGVGKT.

This sequence belongs to the ATPase alpha/beta chains family. In terms of assembly, F-type ATPases have 2 components, CF(1) - the catalytic core - and CF(0) - the membrane proton channel. CF(1) has five subunits: alpha(3), beta(3), gamma(1), delta(1), epsilon(1). CF(0) has three main subunits: a(1), b(2) and c(9-12). The alpha and beta chains form an alternating ring which encloses part of the gamma chain. CF(1) is attached to CF(0) by a central stalk formed by the gamma and epsilon chains, while a peripheral stalk is formed by the delta and b chains.

The protein resides in the cell inner membrane. The enzyme catalyses ATP + H2O + 4 H(+)(in) = ADP + phosphate + 5 H(+)(out). Produces ATP from ADP in the presence of a proton gradient across the membrane. The catalytic sites are hosted primarily by the beta subunits. In Helicobacter pylori (strain ATCC 700392 / 26695) (Campylobacter pylori), this protein is ATP synthase subunit beta.